Reading from the N-terminus, the 488-residue chain is Inosine-5'-monophosphate dehydrogenase (488 aa).

CBS domains follow at residues 95–153 and 157–214; these read VITN…SMKI and MTKE…PNSS. NAD(+)-binding positions include aspartate 251 and 301-303; that span reads GIG. Positions 303 and 305 each coordinate K(+). Serine 306 serves as a coordination point for IMP. Cysteine 308 is a K(+) binding site. Cysteine 308 acts as the Thioimidate intermediate in catalysis. IMP is bound by residues 341–343, 364–365, and 388–392; these read DGG, GS, and YRGMG. Arginine 404 acts as the Proton acceptor in catalysis. Glutamate 416 contributes to the IMP binding site. Glutamate 470, serine 471, and histidine 472 together coordinate K(+).

Belongs to the IMPDH/GMPR family. Homotetramer. Requires K(+) as cofactor.

It carries out the reaction IMP + NAD(+) + H2O = XMP + NADH + H(+). The protein operates within purine metabolism; XMP biosynthesis via de novo pathway; XMP from IMP: step 1/1. With respect to regulation, mycophenolic acid (MPA) is a non-competitive inhibitor that prevents formation of the closed enzyme conformation by binding to the same site as the amobile flap. In contrast, mizoribine monophosphate (MZP) is a competitive inhibitor that induces the closed conformation. MPA is a potent inhibitor of mammalian IMPDHs but a poor inhibitor of the bacterial enzymes. MZP is a more potent inhibitor of bacterial IMPDH. Functionally, catalyzes the conversion of inosine 5'-phosphate (IMP) to xanthosine 5'-phosphate (XMP), the first committed and rate-limiting step in the de novo synthesis of guanine nucleotides, and therefore plays an important role in the regulation of cell growth. This Bacillus subtilis (strain 168) protein is Inosine-5'-monophosphate dehydrogenase.